We begin with the raw amino-acid sequence, 59 residues long: Large ribosomal subunit protein bL32 (59 aa).

Residues 35 to 59 (EAHLRHHISPNGYYRGRKVVKTKND) form a disordered region. Basic residues predominate over residues 49–59 (RGRKVVKTKND).

It belongs to the bacterial ribosomal protein bL32 family.

The protein is Large ribosomal subunit protein bL32 of Polynucleobacter asymbioticus (strain DSM 18221 / CIP 109841 / QLW-P1DMWA-1) (Polynucleobacter necessarius subsp. asymbioticus).